A 129-amino-acid chain; its full sequence is Follitropin subunit beta (129 aa).

The signal sequence occupies residues 1–20 (MKSLQFCFLFCCWKAICCNS). 6 disulfides stabilise this stretch: Cys21-Cys69, Cys35-Cys84, Cys38-Cys122, Cys46-Cys100, Cys50-Cys102, and Cys105-Cys112. 2 N-linked (GlcNAc...) asparagine glycosylation sites follow: Asn25 and Asn42.

Belongs to the glycoprotein hormones subunit beta family. Heterodimer. The active follitropin is a heterodimer composed of an alpha chain/CGA shared with other hormones and a unique beta chain/FSHB shown here.

It is found in the secreted. Functionally, together with the alpha chain CGA constitutes follitropin, the follicle-stimulating hormone, and provides its biological specificity to the hormone heterodimer. Binds FSHR, a G protein-coupled receptor, on target cells to activate downstream signaling pathways. Follitropin is involved in follicle development and spermatogenesis in reproductive organs. The protein is Follitropin subunit beta (FSHB) of Sus scrofa (Pig).